The following is a 237-amino-acid chain: UPF0280 protein Mpal_1292 (237 aa).

The protein belongs to the UPF0280 family.

The sequence is that of UPF0280 protein Mpal_1292 from Methanosphaerula palustris (strain ATCC BAA-1556 / DSM 19958 / E1-9c).